The following is a 59-amino-acid chain: Cortexin domain containing 2 (59 aa).

The helical transmembrane segment at 20–40 (FAIAFVVLVFVFLIVMVFRCV) threads the bilayer.

Its subcellular location is the membrane. The protein is Cortexin domain containing 2 of Mus musculus (Mouse).